The chain runs to 570 residues: Frizzled-2 (570 aa).

The first 28 residues, 1-28, serve as a signal peptide directing secretion; it reads MRARSALPRSALPRLLLPLLLLPAAGPA. At 29–252 the chain is on the extracellular side; the sequence is QFHGEKGISI…HHHTRFARLW (224 aa). The FZ domain maps to 39–158; the sequence is PDHGFCQPIS…HGAEQICVGQ (120 aa). 5 cysteine pairs are disulfide-bonded: Cys-44–Cys-105, Cys-52–Cys-98, Cys-89–Cys-126, Cys-115–Cys-155, and Cys-119–Cys-143. A glycan (N-linked (GlcNAc...) asparagine) is linked at Asn-58. N-linked (GlcNAc...) asparagine glycosylation occurs at Asn-159. Residues 166-194 form a disordered region; sequence PALLTTAPPSGLQPGAGGTPGGPGGGGAP. Residues 179–193 are compositionally biased toward gly residues; sequence PGAGGTPGGPGGGGA. The chain crosses the membrane as a helical span at residues 253–273; it reads ILTWSVLCCASTFFTVTTSLV. Residues 274–284 lie on the Cytoplasmic side of the membrane; that stretch reads AMQRFRYPERP. A helical transmembrane segment spans residues 285-305; it reads IIFLSGCYTMVSVAYIAGFVL. Residues 306–332 are Extracellular-facing; that stretch reads QERVVCNERFSEDGYRTVGQGTKKEGC. Residues 333 to 353 traverse the membrane as a helical segment; the sequence is TILFMMLYFFSMASSIWWVIL. The Cytoplasmic portion of the chain corresponds to 354 to 375; it reads SLTWFLAAGMKWGHAAIEANSQ. A helical membrane pass occupies residues 376–396; the sequence is YFHLAAWAVPAVKTITILAMG. The Extracellular portion of the chain corresponds to 397–419; it reads QIDGDLLSGVCFVGLNRLDPLRG. The helical transmembrane segment at 420–440 threads the bilayer; it reads FVLAPLFVYLFIGTSFLLAGF. The Cytoplasmic portion of the chain corresponds to 441 to 466; it reads VSLFRIRTIMKHDGTKTEPLERLMVR. A helical transmembrane segment spans residues 467 to 487; that stretch reads IGVFSVLYTVPATIVIACYFY. Residues 488–524 are Extracellular-facing; that stretch reads EQAFREHWERSWVSQHCKSLAIPCPAHYTPRTSPDFT. The chain crosses the membrane as a helical span at residues 525 to 545; the sequence is VYMIKYLMTLIVGITSGFWIW. Residues 546-570 are Cytoplasmic-facing; sequence SGKTLHSWRKFYTRLTNSRHGETTV. The Lys-Thr-X-X-X-Trp motif, mediates interaction with the PDZ domain of Dvl family members motif lies at 548 to 553; it reads KTLHSW. Positions 568–570 match the PDZ-binding motif; the sequence is TTV.

The protein belongs to the G-protein coupled receptor Fz/Smo family. In terms of processing, ubiquitinated by ZNRF3, leading to its degradation by the proteasome. Widely expressed. Most abundant in kidney, liver, uterus, ovary and heart. Lower levels seen in brain and intestine. Extremely low in calvaria, mammary glands and testis.

The protein localises to the membrane. The protein resides in the cell membrane. Its function is as follows. Receptor for Wnt proteins. Most of frizzled receptors are coupled to the beta-catenin canonical signaling pathway, which leads to the activation of disheveled proteins, inhibition of GSK-3 kinase, nuclear accumulation of beta-catenin and activation of Wnt target genes. A second signaling pathway involving PKC and calcium fluxes has been seen for some family members, but it is not yet clear if it represents a distinct pathway or if it can be integrated in the canonical pathway, as PKC seems to be required for Wnt-mediated inactivation of GSK-3 kinase. Both pathways seem to involve interactions with G-proteins. May be involved in transduction and intercellular transmission of polarity information during tissue morphogenesis and/or in differentiated tissues. Activation by Wnt5A stimulates PKC activity via a G-protein-dependent mechanism. In Rattus norvegicus (Rat), this protein is Frizzled-2 (Fzd2).